Reading from the N-terminus, the 222-residue chain is Protein-L-isoaspartate O-methyltransferase (222 aa).

Serine 69 is an active-site residue.

Belongs to the methyltransferase superfamily. L-isoaspartyl/D-aspartyl protein methyltransferase family.

The protein localises to the cytoplasm. It carries out the reaction [protein]-L-isoaspartate + S-adenosyl-L-methionine = [protein]-L-isoaspartate alpha-methyl ester + S-adenosyl-L-homocysteine. Its function is as follows. Catalyzes the methyl esterification of L-isoaspartyl residues in peptides and proteins that result from spontaneous decomposition of normal L-aspartyl and L-asparaginyl residues. It plays a role in the repair and/or degradation of damaged proteins. This is Protein-L-isoaspartate O-methyltransferase from Nitrosomonas eutropha (strain DSM 101675 / C91 / Nm57).